Consider the following 176-residue polypeptide: uncharacterized protein (176 aa).

Residues 87–100 (ASASSQLRASRVQS) show a composition bias toward low complexity. Positions 87-109 (ASASSQLRASRVQSGTRQSARAG) are disordered.

This is an uncharacterized protein from Homo sapiens (Human).